The chain runs to 861 residues: DNA mismatch repair protein MutS (861 aa).

Gly-616–Ser-623 contributes to the ATP binding site.

The protein belongs to the DNA mismatch repair MutS family.

Functionally, this protein is involved in the repair of mismatches in DNA. It is possible that it carries out the mismatch recognition step. This protein has a weak ATPase activity. This Haemophilus influenzae (strain 86-028NP) protein is DNA mismatch repair protein MutS.